A 485-amino-acid polypeptide reads, in one-letter code: Trigger factor (485 aa).

The region spanning 169–261 (GDVAIVDFVG…LKELKEKELP (93 aa)) is the PPIase FKBP-type domain.

It belongs to the FKBP-type PPIase family. Tig subfamily.

The protein resides in the cytoplasm. It catalyses the reaction [protein]-peptidylproline (omega=180) = [protein]-peptidylproline (omega=0). Involved in protein export. Acts as a chaperone by maintaining the newly synthesized protein in an open conformation. Functions as a peptidyl-prolyl cis-trans isomerase. This Trichodesmium erythraeum (strain IMS101) protein is Trigger factor.